Reading from the N-terminus, the 215-residue chain is Nuclear autoantigen Sp-100 (215 aa).

The region spanning 1-31 is the SAND domain; the sequence is EGDRGASKNWKLSIRCGGYTLKVLTENKFLP. 2 DNA-binding regions (HMG box) span residues 32 to 108 and 124 to 192; these read EPPS…KTYI and PKRP…AACR. Positions 72–89 match the Nuclear localization signal motif; the sequence is KKRSEMWKTIFAKEKGKF. Disordered regions lie at residues 104-124 and 193-215; these read MKTYIPPKGEKKKKFKDPNAP and AKGKPNSATKRVVKAEKSKKKKE.

As to quaternary structure, homodimer. Interacts with members of the HP1 family of nonhistone chromosomal protein, such as CBX5 and CBX3 via the PxVxL motif. Interacts with ETS1; the interaction is direct and modulates ETS1 transcriptional activity. Interacts with the MRN complex which is composed of two heterodimers RAD50/MRE11 associated with a single NBN; recruits the complex to PML-related bodies. Interacts with HIPK2; positively regulates TP53-dependent transcription. Interacts with CASP8AP2; may negatively regulate CASP8AP2 export from the nucleus to the cytoplasm. In terms of processing, phosphorylated. Sumoylated. Sumoylated with SUMO1. Sumoylation depends on a functional nuclear localization signal but is not necessary for nuclear import or nuclear body targeting. Sumoylation may stabilize the interaction with CBX5.

Its subcellular location is the nucleus. The protein localises to the PML body. It localises to the nuclear body. It is found in the cytoplasm. Together with PML, this tumor suppressor is a major constituent of the PML bodies, a subnuclear organelle involved in a large number of physiological processes including cell growth, differentiation and apoptosis. Functions as a transcriptional coactivator of ETS1 and ETS2. Under certain conditions, it may also act as a corepressor of ETS1 preventing its binding to DNA. Through the regulation of ETS1 it may play a role in angiogenesis, controlling endothelial cell motility and invasion. Through interaction with the MRN complex it may be involved in the regulation of telomeres lengthening. May also regulate TP53-mediated transcription and through CASP8AP2, regulate FAS-mediated apoptosis. May also play a role in infection by viruses through mechanisms that may involve chromatin and/or transcriptional regulation. The protein is Nuclear autoantigen Sp-100 (SP100) of Pan troglodytes (Chimpanzee).